A 492-amino-acid chain; its full sequence is Ketol-acid reductoisomerase (NADP(+)) (492 aa).

Residues 14–208 (LDQLGRCRFM…GGHKAGVLES (195 aa)) form the KARI N-terminal Rossmann domain. NADP(+) is bound by residues 45–48 (CGAQ), R68, R76, S78, and 108–110 (DKQ). The active site involves H132. G158 lines the NADP(+) pocket. KARI C-terminal knotted domains follow at residues 209 to 344 (SFVA…NAPK) and 345 to 485 (YDGK…MTDM). 4 residues coordinate Mg(2+): D217, E221, E389, and E393. S414 is a binding site for substrate.

Belongs to the ketol-acid reductoisomerase family. The cofactor is Mg(2+).

It carries out the reaction (2R)-2,3-dihydroxy-3-methylbutanoate + NADP(+) = (2S)-2-acetolactate + NADPH + H(+). It catalyses the reaction (2R,3R)-2,3-dihydroxy-3-methylpentanoate + NADP(+) = (S)-2-ethyl-2-hydroxy-3-oxobutanoate + NADPH + H(+). It participates in amino-acid biosynthesis; L-isoleucine biosynthesis; L-isoleucine from 2-oxobutanoate: step 2/4. It functions in the pathway amino-acid biosynthesis; L-valine biosynthesis; L-valine from pyruvate: step 2/4. Its function is as follows. Involved in the biosynthesis of branched-chain amino acids (BCAA). Catalyzes an alkyl-migration followed by a ketol-acid reduction of (S)-2-acetolactate (S2AL) to yield (R)-2,3-dihydroxy-isovalerate. In the isomerase reaction, S2AL is rearranged via a Mg-dependent methyl migration to produce 3-hydroxy-3-methyl-2-ketobutyrate (HMKB). In the reductase reaction, this 2-ketoacid undergoes a metal-dependent reduction by NADPH to yield (R)-2,3-dihydroxy-isovalerate. This chain is Ketol-acid reductoisomerase (NADP(+)), found in Haemophilus influenzae (strain PittGG).